The chain runs to 71 residues: UPF0352 protein Swoo_2786 (71 aa).

This sequence belongs to the UPF0352 family.

The protein is UPF0352 protein Swoo_2786 of Shewanella woodyi (strain ATCC 51908 / MS32).